The primary structure comprises 126 residues: Glycine cleavage system H protein (126 aa).

The Lipoyl-binding domain maps to 22–104 (TVTIGITEYA…YEKAWMVKVK (83 aa)). K63 carries the post-translational modification N6-lipoyllysine.

The protein belongs to the GcvH family. The glycine cleavage system is composed of four proteins: P, T, L and H. It depends on (R)-lipoate as a cofactor.

The glycine cleavage system catalyzes the degradation of glycine. The H protein shuttles the methylamine group of glycine from the P protein to the T protein. Its function is as follows. Is also involved in protein lipoylation via its role as an octanoyl/lipoyl carrier protein intermediate. This is Glycine cleavage system H protein from Staphylococcus carnosus (strain TM300).